We begin with the raw amino-acid sequence, 160 residues long: Transcription elongation factor GreA (160 aa).

It belongs to the GreA/GreB family.

In terms of biological role, necessary for efficient RNA polymerase transcription elongation past template-encoded arresting sites. The arresting sites in DNA have the property of trapping a certain fraction of elongating RNA polymerases that pass through, resulting in locked ternary complexes. Cleavage of the nascent transcript by cleavage factors such as GreA or GreB allows the resumption of elongation from the new 3'terminus. GreA releases sequences of 2 to 3 nucleotides. The sequence is that of Transcription elongation factor GreA from Francisella tularensis subsp. tularensis (strain FSC 198).